Here is a 1488-residue protein sequence, read N- to C-terminus: Chromosome partition protein MukB (1488 aa).

34 to 41 (GGNGAGKS) serves as a coordination point for ATP. 3 coiled-coil regions span residues 326 to 418 (LEAD…QYNQ), 444 to 472 (LDTF…QTAH), and 509 to 602 (RHLA…RRAP). A flexible hinge region spans residues 666–783 (PGGAEDQRLN…SLPIFGRAAR (118 aa)). Coiled-coil stretches lie at residues 835–923 (EAEI…AKLE), 977–1116 (EMLS…AKAG), and 1209–1265 (VEAI…LQSV). Residues 1049–1074 (ADSGAEERARQRRDELHAQLSNNRSR) form a disordered region. The segment covering 1051 to 1065 (SGAEERARQRRDELH) has biased composition (basic and acidic residues).

This sequence belongs to the SMC family. MukB subfamily. As to quaternary structure, homodimerization via its hinge domain. Binds to DNA via its C-terminal region. Interacts, and probably forms a ternary complex, with MukE and MukF via its C-terminal region. The complex formation is stimulated by calcium or magnesium. Interacts with tubulin-related protein FtsZ.

Its subcellular location is the cytoplasm. It is found in the nucleoid. In terms of biological role, plays a central role in chromosome condensation, segregation and cell cycle progression. Functions as a homodimer, which is essential for chromosome partition. Involved in negative DNA supercoiling in vivo, and by this means organize and compact chromosomes. May achieve or facilitate chromosome segregation by condensation DNA from both sides of a centrally located replisome during cell division. This is Chromosome partition protein MukB from Salmonella agona (strain SL483).